Reading from the N-terminus, the 65-residue chain is UPF0434 protein HSM_0997 (65 aa).

This sequence belongs to the UPF0434 family.

The chain is UPF0434 protein HSM_0997 from Histophilus somni (strain 2336) (Haemophilus somnus).